The chain runs to 93 residues: Small ribosomal subunit protein uS19 (93 aa).

It belongs to the universal ribosomal protein uS19 family.

Its function is as follows. Protein S19 forms a complex with S13 that binds strongly to the 16S ribosomal RNA. The chain is Small ribosomal subunit protein uS19 from Acidothermus cellulolyticus (strain ATCC 43068 / DSM 8971 / 11B).